Reading from the N-terminus, the 121-residue chain is Spermidine export protein MdtJ (121 aa).

4 consecutive transmembrane segments (helical) span residues 1 to 21 (MYIY…GTLS), 32 to 52 (GGFI…SFAV), 55 to 75 (IALG…ITLF), and 82 to 102 (ESLS…IVLI).

It belongs to the drug/metabolite transporter (DMT) superfamily. Small multidrug resistance (SMR) (TC 2.A.7.1) family. MdtJ subfamily. In terms of assembly, forms a complex with MdtI.

It localises to the cell inner membrane. Functionally, catalyzes the excretion of spermidine. The protein is Spermidine export protein MdtJ of Escherichia coli O139:H28 (strain E24377A / ETEC).